We begin with the raw amino-acid sequence, 438 residues long: Putative B3 domain-containing protein Os04g0676650 (438 aa).

The span at 1–11 shows a compositional bias: low complexity; that stretch reads MADARGSSSSS. Disordered stretches follow at residues 1–30 and 225–285; these read MADARGSSSSSGDGGGGEGKGGAGHGDFVG and SSSH…MNQN. Positions 12–30 are enriched in gly residues; that stretch reads GDGGGGEGKGGAGHGDFVG. Positions 258–269 are enriched in basic and acidic residues; that stretch reads RRSDMESEKNDD. Over residues 272–285 the composition is skewed to polar residues; the sequence is DQTPVSEPPSMNQN. A DNA-binding region (TF-B3) is located at residues 302-404; that stretch reads LRKELTNSDV…KFVVRGEKAI (103 aa).

Its subcellular location is the nucleus. The chain is Putative B3 domain-containing protein Os04g0676650 from Oryza sativa subsp. japonica (Rice).